The chain runs to 658 residues: Deoxynucleoside triphosphate triphosphohydrolase SAMHD1 (658 aa).

A disordered region spans residues 23 to 68 (SQPRVSEVAMQSAPLEQPAKRPRCDGSPRTPPSTPPATANLSADDD). Serine 49 bears the Phosphoserine mark. Threonine 52 bears the Phosphothreonine mark. The residue at position 55 (serine 55) is a Phosphoserine. Position 56 is a phosphothreonine (threonine 56). Phosphoserine is present on residues serine 64 and serine 125. The SAM domain maps to 77–142 (WEPEDVCSFL…IECIQQLSQS (66 aa)). Lysine 148 and valine 149 together coordinate GTP. Asparagine 151 is a binding site for dGTP. 3 residues coordinate GTP: aspartate 169, glutamine 174, and arginine 177. DGTP contacts are provided by leucine 182 and valine 188. The HD domain maps to 196–348 (RFEHSLGVGY…GIDVDKWDYF (153 aa)). The Mn(2+) site is built by histidine 199, histidine 238, and aspartate 239. Positions 239, 247, 265, and 266 each coordinate dGTP. Histidine 265 is an active-site residue. A Mn(2+)-binding site is contributed by aspartate 343. Residues tyrosine 347, aspartate 351, arginine 365, arginine 395, lysine 397, asparagine 401, tyrosine 417, histidine 419, and lysine 420 each contribute to the dGTP site. Residues arginine 494 and lysine 498 each coordinate GTP. Lysine 509 is covalently cross-linked (Glycyl lysine isopeptide (Lys-Gly) (interchain with G-Cter in SUMO2)). Position 565 (lysine 565) interacts with GTP. Lysine 565 contributes to the dGTP binding site. Threonine 634 is modified (phosphothreonine). The residue at position 634 (threonine 634) is a (Microbial infection) Phosphothreonine.

The protein belongs to the SAMHD1 family. As to quaternary structure, homodimer; in absence of GTP and dNTP. Homotetramer; in GTP- and dNTP-bound form. Interacts with MRE11; leading to stimulate the exonuclease activity of MRE11. Interacts with RBBP8/CtIP. Interacts with RBBP8/CtIP. Interacts (via its C-terminus) with CD81. The cofactor is Zn(2+). In terms of processing, phosphorylation at Thr-634 by CDK1 acts as a switch to control deoxynucleoside triphosphate (dNTPase)-dependent and -independent functions. Phosphorylation at Thr-634 takes place in cycling cells: it reduces the stability of the homotetramer, impairing the dNTPase activity and subsequent ability to restrict infection by viruses. It also inhibits ability to suppress LINE-1 retrotransposon activity. In contrast, phosphorylation at Thr-634 promotes DNA end resection at stalled replication forks in response to DNA damage. Post-translationally, (Microbial infection) Phosphorylation at Thr-634 by mouse cytomegalovirus kinase M97 leads to a reduced level of dNTP hydrolase activity and the loss of viral restriction. Not phosphorylated by CDK1 at the C-terminus.

It localises to the nucleus. Its subcellular location is the chromosome. It catalyses the reaction a 2'-deoxyribonucleoside 5'-triphosphate + H2O = a 2'-deoxyribonucleoside + triphosphate + H(+). It carries out the reaction dATP + H2O = 2'-deoxyadenosine + triphosphate + H(+). The enzyme catalyses dCTP + H2O = 2'-deoxycytidine + triphosphate + H(+). The catalysed reaction is dGTP + H2O = 2'-deoxyguanosine + triphosphate + H(+). It catalyses the reaction dTTP + H2O = thymidine + triphosphate + H(+). Its activity is regulated as follows. Allosterically activated and regulated via the combined actions of GTP and dNTPs (dATP, dGTP, dTTP and dCTP): Allosteric site 1 binds GTP, while allosteric site 2 binds dNTP. Allosteric activation promotes the formation of highly active homotetramers. Isoform 1: Phosphorylation at Thr-634 impairs homotetramerization, thereby inhibiting dNTPase activity, leading to reduced ability to restrict infection by viruses. In terms of biological role, protein that acts both as a host restriction factor involved in defense response to virus and as a regulator of DNA end resection at stalled replication forks. Has deoxynucleoside triphosphate (dNTPase) activity, which is required to restrict infection by viruses: dNTPase activity reduces cellular dNTP levels to levels too low for retroviral reverse transcription to occur, blocking early-stage virus replication in dendritic and other myeloid cells. Likewise, suppresses LINE-1 retrotransposon activity. In addition to virus restriction, dNTPase activity acts as a regulator of DNA precursor pools by regulating dNTP pools. Phosphorylation at Thr-634 acts as a switch to control dNTPase-dependent and -independent functions: it inhibits dNTPase activity and ability to restrict infection by viruses, while it promotes DNA end resection at stalled replication forks. Functions during S phase at stalled DNA replication forks to promote the resection of gapped or reversed forks: acts by stimulating the exonuclease activity of MRE11, activating the ATR-CHK1 pathway and allowing the forks to restart replication. Its ability to promote degradation of nascent DNA at stalled replication forks is required to prevent induction of type I interferons, thereby preventing chronic inflammation. Ability to promote DNA end resection at stalled replication forks is independent of dNTPase activity. Enhances immunoglobulin hypermutation in B-lymphocytes by promoting transversion mutation. The chain is Deoxynucleoside triphosphate triphosphohydrolase SAMHD1 from Mus musculus (Mouse).